Here is a 102-residue protein sequence, read N- to C-terminus: Small ribosomal subunit protein bS20 (102 aa).

The protein belongs to the bacterial ribosomal protein bS20 family.

Binds directly to 16S ribosomal RNA. The sequence is that of Small ribosomal subunit protein bS20 from Synechococcus sp. (strain WH7803).